Here is a 236-residue protein sequence, read N- to C-terminus: Leucyl/phenylalanyl-tRNA--protein transferase (236 aa).

This sequence belongs to the L/F-transferase family.

It localises to the cytoplasm. It catalyses the reaction N-terminal L-lysyl-[protein] + L-leucyl-tRNA(Leu) = N-terminal L-leucyl-L-lysyl-[protein] + tRNA(Leu) + H(+). It carries out the reaction N-terminal L-arginyl-[protein] + L-leucyl-tRNA(Leu) = N-terminal L-leucyl-L-arginyl-[protein] + tRNA(Leu) + H(+). The enzyme catalyses L-phenylalanyl-tRNA(Phe) + an N-terminal L-alpha-aminoacyl-[protein] = an N-terminal L-phenylalanyl-L-alpha-aminoacyl-[protein] + tRNA(Phe). In terms of biological role, functions in the N-end rule pathway of protein degradation where it conjugates Leu, Phe and, less efficiently, Met from aminoacyl-tRNAs to the N-termini of proteins containing an N-terminal arginine or lysine. The polypeptide is Leucyl/phenylalanyl-tRNA--protein transferase (Aliivibrio salmonicida (strain LFI1238) (Vibrio salmonicida (strain LFI1238))).